The following is a 560-amino-acid chain: Oxygen-dependent choline dehydrogenase (560 aa).

6–35 (DYIIIGGGSAGSVLGSRISEDVSNNVLVLE) is an FAD binding site. The active-site Proton acceptor is His-472.

It belongs to the GMC oxidoreductase family. FAD is required as a cofactor.

It catalyses the reaction choline + A = betaine aldehyde + AH2. It carries out the reaction betaine aldehyde + NAD(+) + H2O = glycine betaine + NADH + 2 H(+). Its pathway is amine and polyamine biosynthesis; betaine biosynthesis via choline pathway; betaine aldehyde from choline (cytochrome c reductase route): step 1/1. Its function is as follows. Involved in the biosynthesis of the osmoprotectant glycine betaine. Catalyzes the oxidation of choline to betaine aldehyde and betaine aldehyde to glycine betaine at the same rate. The chain is Oxygen-dependent choline dehydrogenase from Staphylococcus saprophyticus subsp. saprophyticus (strain ATCC 15305 / DSM 20229 / NCIMB 8711 / NCTC 7292 / S-41).